The chain runs to 509 residues: Probable aspartic-type endopeptidase CTSD (509 aa).

Residues 1 to 21 (MQFLWLCLLSAVTLQFTGTLA) form the signal peptide. Positions 102-408 (YFSEVKVGSE…DFDKNRVGLA (307 aa)) constitute a Peptidase A1 domain. Residue Asp120 is part of the active site. N-linked (GlcNAc...) asparagine glycosylation occurs at Asn174. Asp302 is a catalytic residue. Asn361 carries N-linked (GlcNAc...) asparagine glycosylation. A disordered region spans residues 451-489 (NKAPSGGSPGLPAESGSDSTTNGEATNGATSSPNSSSSV). A compositionally biased stretch (polar residues) spans 466–480 (GSDSTTNGEATNGAT). Residue Asn484 is glycosylated (N-linked (GlcNAc...) asparagine). The GPI-anchor amidated serine moiety is linked to residue Ser485. A propeptide spans 486-509 (SSSVLTPTWLTLAVFFAIGSSLWS) (removed in mature form).

The protein belongs to the peptidase A1 family.

The protein resides in the cell membrane. In terms of biological role, probable GPI-anchored aspartic-type endopeptidase which contributes to virulence. This chain is Probable aspartic-type endopeptidase CTSD (CTSD), found in Arthroderma benhamiae (strain ATCC MYA-4681 / CBS 112371) (Trichophyton mentagrophytes).